The primary structure comprises 447 residues: Cysteine--tRNA ligase (447 aa).

Position 28 (C28) interacts with Zn(2+). Positions 30–40 (PTVYNYIHIGN) match the 'HIGH' region motif. Residues C211, H236, and E240 each coordinate Zn(2+). The 'KMSKS' region motif lies at 268-272 (KMSKS). Residue K271 participates in ATP binding.

This sequence belongs to the class-I aminoacyl-tRNA synthetase family. Monomer. Zn(2+) is required as a cofactor.

It localises to the cytoplasm. It carries out the reaction tRNA(Cys) + L-cysteine + ATP = L-cysteinyl-tRNA(Cys) + AMP + diphosphate. The sequence is that of Cysteine--tRNA ligase from Streptococcus thermophilus (strain CNRZ 1066).